Reading from the N-terminus, the 553-residue chain is Solute carrier family 22 member 2 (553 aa).

Topologically, residues 1-21 (MPTVDDILEHIGEFHLFQKQT) are cytoplasmic. A helical membrane pass occupies residues 22 to 42 (FFLLALLSGAFTPIYVGIVFL). Residues 43-150 (GFTPNHHCRS…LVCAHSWMLD (108 aa)) are Extracellular-facing. N-linked (GlcNAc...) asparagine glycosylation occurs at asparagine 71. Residues 151–171 (LFQSLVNVGFFIGAVGIGYLA) form a helical membrane-spanning segment. The Cytoplasmic portion of the chain corresponds to 172-177 (DRFGRK). A helical membrane pass occupies residues 178–198 (FCLLVTILINAISGVLMAISP). The Extracellular segment spans residues 199–210 (NYAWMLVFRFLQ). A helical membrane pass occupies residues 211–231 (GLVSKAGWLIGYILITEFVGL). Topologically, residues 232-238 (GYRRTVG) are cytoplasmic. Residues 239–259 (ICYQIAFTVGLLILAGVAYAL) form a helical membrane-spanning segment. The Extracellular portion of the chain corresponds to 260-263 (PNWR). A helical membrane pass occupies residues 264–284 (WLQFAVTLPNFCFLLYFWCIP). Positions 284 to 288 (PESPR) match the Proline-rich sequence motif. Residues 285-348 (ESPRWLISQN…VRTPQIRKHT (64 aa)) lie on the Cytoplasmic side of the membrane. The helical transmembrane segment at 349–369 (LILMYNWFTSSVLYQGLIMHM) threads the bilayer. The Extracellular portion of the chain corresponds to 370-375 (GLAGDN). The helical transmembrane segment at 376–396 (IYLDFFYSALVEFPAAFIIIL) threads the bilayer. The Cytoplasmic portion of the chain corresponds to 397-404 (TIDRIGRR). A helical membrane pass occupies residues 405–425 (YPWAVSNMVAGAACLASVFIP). Residues 426–432 (DDLQWLK) are Extracellular-facing. Residues 433–453 (ITVACLGRMGITIAYEMVCLV) form a helical membrane-spanning segment. Over 454–464 (NAELYPTYIRN) the chain is Cytoplasmic. Residues 465 to 485 (LAVLVCSSMCDIGGIVTPFLV) traverse the membrane as a helical segment. At 486 to 494 (YRLTDIWLE) the chain is on the extracellular side. A helical transmembrane segment spans residues 495–515 (FPLVVFAVVGLVAGGLVLLLP). At 516–553 (ETKGKALPETIEDAEKMQRPRKKKEKRIYLQVKKAELS) the chain is on the cytoplasmic side.

Belongs to the major facilitator (TC 2.A.1) superfamily. Organic cation transporter (TC 2.A.1.19) family. Tyrosine phosphorylated by tyrosine-protein kinase YES1. As to expression, expressed in kidney and ureter. To a lower extent, also expressed in brain and embryo.

The protein resides in the basolateral cell membrane. The protein localises to the basal cell membrane. Its subcellular location is the apical cell membrane. The catalysed reaction is (R)-noradrenaline(out) = (R)-noradrenaline(in). It catalyses the reaction (R)-adrenaline(out) = (R)-adrenaline(in). It carries out the reaction serotonin(out) = serotonin(in). The enzyme catalyses dopamine(out) = dopamine(in). The catalysed reaction is histamine(out) = histamine(in). It catalyses the reaction thiamine(in) = thiamine(out). It carries out the reaction creatinine(in) = creatinine(out). The enzyme catalyses 1-methylnicotinamide(out) = 1-methylnicotinamide(in). The catalysed reaction is guanidine(out) = guanidine(in). It catalyses the reaction choline(out) = choline(in). It carries out the reaction agmatine(out) = agmatine(in). The enzyme catalyses putrescine(out) = putrescine(in). The catalysed reaction is spermidine(in) = spermidine(out). It catalyses the reaction tyramine(in) = tyramine(out). It carries out the reaction L-histidyl-L-proline diketopiperazine(in) = L-histidyl-L-proline diketopiperazine(out). The enzyme catalyses (R)-salsolinol(in) = (R)-salsolinol(out). The catalysed reaction is N-methyl-(R)-salsolinol(in) = N-methyl-(R)-salsolinol(out). It catalyses the reaction acetylcholine(in) = acetylcholine(out). It carries out the reaction prostaglandin F2alpha(out) = prostaglandin F2alpha(in). The enzyme catalyses prostaglandin E2(out) = prostaglandin E2(in). With respect to regulation, tyrosine phosphorylation of the transporter leads to activation of the transport activity. TEA uptake is activated by tyrosine phosphorylation. Inhibited by cGMP, most likely through a cGMP-binding protein that interacts with OCT2. Functionally, electrogenic voltage-dependent transporter that mediates the transport of a variety of organic cations such as endogenous bioactive amines, cationic drugs and xenobiotics. Functions as a Na(+)-independent, bidirectional uniporter. Cation cellular uptake or release is driven by the electrochemical potential, i.e. membrane potential and concentration gradient. However, may also engage electroneutral cation exchange when saturating concentrations of cation substrates are reached. Predominantly expressed at the basolateral membrane of hepatocytes and proximal tubules and involved in the uptake and disposition of cationic compounds by hepatic and renal clearance from the blood flow. Implicated in monoamine neurotransmitters uptake such as histamine, dopamine, adrenaline/epinephrine, noradrenaline/norepinephrine, serotonin and tyramine, thereby supporting a physiological role in the central nervous system by regulating interstitial concentrations of neurotransmitters. Also capable of transporting dopaminergic neuromodulators cyclo(his-pro), salsolinol and N-methyl-salsolinol, thereby involved in the maintenance of dopaminergic cell integrity in the central nervous system. Mediates the bidirectional transport of acetylcholine (ACh) at the apical membrane of ciliated cell in airway epithelium, thereby playing a role in luminal release of ACh from bronchial epithelium. Also transports guanidine and endogenous monoamines such as vitamin B1/thiamine, creatinine and N-1-methylnicotinamide (NMN). Mediates the uptake and efflux of quaternary ammonium compound choline. Mediates the bidirectional transport of polyamine agmatine and the uptake of polyamines putrescine and spermidine. Able to transport non-amine endogenous compounds such as prostaglandin E2 (PGE2) and prostaglandin F2-alpha (PGF2-alpha). Also involved in the uptake of xenobiotic 4-(4-(dimethylamino)styryl)-N-methylpyridinium (ASP). May contribute to regulate the transport of organic compounds in testis across the blood-testis-barrier. This Mus musculus (Mouse) protein is Solute carrier family 22 member 2.